A 460-amino-acid polypeptide reads, in one-letter code: UDP-N-acetylmuramate--L-alanine ligase (460 aa).

Position 112–118 (112–118 (GTHGKTT)) interacts with ATP.

This sequence belongs to the MurCDEF family.

It is found in the cytoplasm. It catalyses the reaction UDP-N-acetyl-alpha-D-muramate + L-alanine + ATP = UDP-N-acetyl-alpha-D-muramoyl-L-alanine + ADP + phosphate + H(+). The protein operates within cell wall biogenesis; peptidoglycan biosynthesis. Functionally, cell wall formation. This chain is UDP-N-acetylmuramate--L-alanine ligase, found in Pelobacter propionicus (strain DSM 2379 / NBRC 103807 / OttBd1).